We begin with the raw amino-acid sequence, 472 residues long: Glycosyl hydrolase family 109 protein (472 aa).

Residues 1–35 (MSQTPAVSRRLLLGSAAATGALATGIGSAAPVAAA) constitute a signal peptide (tat-type signal). NAD(+) is bound by residues 68-69 (NR), Asp90, 139-142 (WEFH), His145, 159-160 (EL), and Asn188. Substrate-binding positions include Tyr217, Arg236, 248–251 (YPMH), and Tyr330. Residue Tyr248 participates in NAD(+) binding.

It belongs to the Gfo/Idh/MocA family. Glycosyl hydrolase 109 subfamily. NAD(+) is required as a cofactor. Predicted to be exported by the Tat system. The position of the signal peptide cleavage has not been experimentally proven.

In terms of biological role, glycosidase. Has no alpha-N-acetylgalactosaminidase activity. This chain is Glycosyl hydrolase family 109 protein, found in Streptomyces coelicolor (strain ATCC BAA-471 / A3(2) / M145).